Here is a 353-residue protein sequence, read N- to C-terminus: Fasciculation and elongation protein zeta-2 (353 aa).

The disordered stretch occupies residues 19-49 (SLLDQENCNASPEPGAEAGAEAGGGADGFPA). Low complexity predominate over residues 28-38 (ASPEPGAEAGA). Phosphoserine occurs at positions 135, 176, and 195. Residues 214–286 (KRLSVSELNE…AKKKKKLKNG (73 aa)) adopt a coiled-coil conformation. The tract at residues 271-300 (KEHKETAKKKKKLKNGSSQNGKNERSHMPG) is disordered.

It belongs to the zygin family. In terms of assembly, homodimer; disulfide-linked. May form heterodimers with FEZ1. Interacts with synaptotagmin. As to expression, expressed in nonneural tissues, such as heart, lung, spleen, muscle, testis, placenta and melanocytes.

Involved in axonal outgrowth and fasciculation. This Homo sapiens (Human) protein is Fasciculation and elongation protein zeta-2 (FEZ2).